Here is a 90-residue protein sequence, read N- to C-terminus: U7-theraphotoxin-Hhn1a 1 (90 aa).

An N-terminal signal peptide occupies residues 1–19; sequence MKTAIFTVVLALAVFAVLS. The propeptide occupies 20–50; sequence FGWEANEKALSEEFTELIHEKEAASETEARE. Disulfide bonds link C51–C65, C58–C70, and C64–C81.

The protein belongs to the neurotoxin 10 (Hwtx-1) family. 13 (Hntx-13) subfamily. As to expression, expressed by the venom gland.

The protein localises to the secreted. Its function is as follows. Ion channel inhibitor. The sequence is that of U7-theraphotoxin-Hhn1a 1 from Cyriopagopus hainanus (Chinese bird spider).